The sequence spans 406 residues: Nicotinate phosphoribosyltransferase (406 aa).

The residue at position 225 (histidine 225) is a Phosphohistidine; by autocatalysis.

It belongs to the NAPRTase family. Transiently phosphorylated on a His residue during the reaction cycle. Phosphorylation strongly increases the affinity for substrates and increases the rate of nicotinate D-ribonucleotide production. Dephosphorylation regenerates the low-affinity form of the enzyme, leading to product release.

The catalysed reaction is nicotinate + 5-phospho-alpha-D-ribose 1-diphosphate + ATP + H2O = nicotinate beta-D-ribonucleotide + ADP + phosphate + diphosphate. Its pathway is cofactor biosynthesis; NAD(+) biosynthesis; nicotinate D-ribonucleotide from nicotinate: step 1/1. Its function is as follows. Catalyzes the synthesis of beta-nicotinate D-ribonucleotide from nicotinate and 5-phospho-D-ribose 1-phosphate at the expense of ATP. The chain is Nicotinate phosphoribosyltransferase from Psychromonas ingrahamii (strain DSM 17664 / CCUG 51855 / 37).